We begin with the raw amino-acid sequence, 113 residues long: Retrotransposon Gag-like protein 8C (113 aa).

This sequence belongs to the FAM127 family.

This Homo sapiens (Human) protein is Retrotransposon Gag-like protein 8C.